A 199-amino-acid polypeptide reads, in one-letter code: ATP-dependent Clp protease proteolytic subunit (199 aa).

Residues 1–23 (MTTSAARKGLRTRGSACPRATRS) are disordered. Serine 100 serves as the catalytic Nucleophile. The active site involves histidine 125.

Belongs to the peptidase S14 family. In terms of assembly, fourteen ClpP subunits assemble into 2 heptameric rings which stack back to back to give a disk-like structure with a central cavity, resembling the structure of eukaryotic proteasomes.

The protein resides in the cytoplasm. It catalyses the reaction Hydrolysis of proteins to small peptides in the presence of ATP and magnesium. alpha-casein is the usual test substrate. In the absence of ATP, only oligopeptides shorter than five residues are hydrolyzed (such as succinyl-Leu-Tyr-|-NHMec, and Leu-Tyr-Leu-|-Tyr-Trp, in which cleavage of the -Tyr-|-Leu- and -Tyr-|-Trp bonds also occurs).. In terms of biological role, cleaves peptides in various proteins in a process that requires ATP hydrolysis. Has a chymotrypsin-like activity. Plays a major role in the degradation of misfolded proteins. The chain is ATP-dependent Clp protease proteolytic subunit from Paracoccus denitrificans.